Reading from the N-terminus, the 161-residue chain is 4-hydroxybenzoyl-CoA reductase subunit gamma (161 aa).

In terms of domain architecture, 2Fe-2S ferredoxin-type spans 3 to 79 (NILRLTLNGR…GKKVETVESL (77 aa)). Cys41, Cys46, Cys49, Cys61, Cys100, Cys103, Cys135, and Cys137 together coordinate [2Fe-2S] cluster.

Heterohexamer of two alpha, two beta and two gamma subunits. [2Fe-2S] cluster serves as cofactor.

It catalyses the reaction oxidized 2[4Fe-4S]-[ferredoxin] + benzoyl-CoA + H2O = 4-hydroxybenzoyl-CoA + reduced 2[4Fe-4S]-[ferredoxin] + 2 H(+). Its activity is regulated as follows. Inactivated by low concentrations of cyanide in vitro. Its function is as follows. Component of a complex that catalyzes the reductive dehydroxylation of 4-hydroxybenzoyl-CoA to benzoyl-CoA. Reaction is not reversible. Is a key enzyme in the anaerobic degradation of phenolic compounds. This is 4-hydroxybenzoyl-CoA reductase subunit gamma (hcrC) from Thauera aromatica.